Consider the following 205-residue polypeptide: MNQQYPSTLLEKAVGEFSKLPGIGRKTAMRLVLHLLRQDTSVVEAFGSSIITLKHEVKYCKVCHNISDTETCQICANPQRDASMVCVVENIRDVMAVEATQQYRGLYHVLGGVISPMDGVGPGDLQIESLVRRVAEGGINEVILALSTTMEGDTTNFYIYRKLEKMGVKLSVLARGVSIGDELEYTDEITLGRSIVNRTTFTGTV.

The C4-type zinc finger occupies 60 to 75; the sequence is CKVCHNISDTETCQIC. In terms of domain architecture, Toprim spans 83 to 178; sequence SMVCVVENIR…KLSVLARGVS (96 aa).

Belongs to the RecR family.

In terms of biological role, may play a role in DNA repair. It seems to be involved in an RecBC-independent recombinational process of DNA repair. It may act with RecF and RecO. The protein is Recombination protein RecR of Bacteroides fragilis (strain ATCC 25285 / DSM 2151 / CCUG 4856 / JCM 11019 / LMG 10263 / NCTC 9343 / Onslow / VPI 2553 / EN-2).